Consider the following 316-residue polypeptide: MMLDLGNESSVTMFILSGFSEYPHLHAPLFLLFFMIYTVTLIGNLGIIVVRKVNPKLHTPMYFFLSHLSFLDICYSSVFTPKLLEILIVEDRTISFKGCMTQFFLICAFVITEMFMLAVMAYDRFVAVCNPLLYTVSMSPKLCAFLVAGTYMWGVLCSLTITYSLLQLSYCGPNIINHFGCEYSAILSLSCSDPTFSQVVCLTISIFNETCSLLIILASYVFIVVTIIKMPSKGGLQKAFSTCSSHLTAISIFHGIILLLYCVPNSKNSWLVVKVATVLFTVMIPMLNPLIYSLRNKDVKGTVSRLMHLKLQAHST.

The Extracellular segment spans residues 1–28 (MMLDLGNESSVTMFILSGFSEYPHLHAP). N-linked (GlcNAc...) asparagine glycosylation occurs at asparagine 7. Residues 29 to 50 (LFLLFFMIYTVTLIGNLGIIVV) form a helical membrane-spanning segment. Residues 51 to 61 (RKVNPKLHTPM) are Cytoplasmic-facing. The helical transmembrane segment at 62–80 (YFFLSHLSFLDICYSSVFT) threads the bilayer. The Extracellular segment spans residues 81 to 99 (PKLLEILIVEDRTISFKGC). Cysteines 99 and 181 form a disulfide. The helical transmembrane segment at 100–122 (MTQFFLICAFVITEMFMLAVMAY) threads the bilayer. Topologically, residues 123-141 (DRFVAVCNPLLYTVSMSPK) are cytoplasmic. The chain crosses the membrane as a helical span at residues 142–166 (LCAFLVAGTYMWGVLCSLTITYSLL). At 167-205 (QLSYCGPNIINHFGCEYSAILSLSCSDPTFSQVVCLTIS) the chain is on the extracellular side. A helical transmembrane segment spans residues 206–228 (IFNETCSLLIILASYVFIVVTII). Residues 229–239 (KMPSKGGLQKA) are Cytoplasmic-facing. A helical membrane pass occupies residues 240–263 (FSTCSSHLTAISIFHGIILLLYCV). Residues 264-268 (PNSKN) are Extracellular-facing. Residues 269–291 (SWLVVKVATVLFTVMIPMLNPLI) form a helical membrane-spanning segment. Over 292-316 (YSLRNKDVKGTVSRLMHLKLQAHST) the chain is Cytoplasmic.

Belongs to the G-protein coupled receptor 1 family.

It is found in the cell membrane. Functionally, olfactory receptor. This chain is Olfactory receptor 1165, found in Mus musculus (Mouse).